A 178-amino-acid chain; its full sequence is RNA replicase polyprotein (178 aa).

Belongs to the tymovirus NS35 RNA replicase polyprotein family.

The enzyme catalyses RNA(n) + a ribonucleoside 5'-triphosphate = RNA(n+1) + diphosphate. This is RNA replicase polyprotein from Physalis heterophylla (PhMV).